Reading from the N-terminus, the 113-residue chain is U11-theraphotoxin-Hhn1a (113 aa).

An N-terminal signal peptide occupies residues 1 to 21; sequence MNTVRVTFLLVFVLAVSLGQA. Residues 22–74 constitute a propeptide that is removed on maturation; it reads DKDENRMEMQEKTEQGKSYLDFAENLLLQKLEELVAKLLEEDSEESRNSRQKR. 3 disulfide bridges follow: C75/C90, C82/C95, and C89/C110.

The protein belongs to the neurotoxin 14 (magi-1) family. 01 (HNTX-16) subfamily. Expressed by the venom gland.

It is found in the secreted. Functionally, probable ion channel inhibitor. The protein is U11-theraphotoxin-Hhn1a of Cyriopagopus hainanus (Chinese bird spider).